Consider the following 61-residue polypeptide: Small ribosomal subunit protein uS14 (61 aa).

Zn(2+)-binding residues include Cys24, Cys27, Cys40, and Cys43.

Belongs to the universal ribosomal protein uS14 family. Zinc-binding uS14 subfamily. In terms of assembly, part of the 30S ribosomal subunit. Contacts proteins S3 and S10. Zn(2+) serves as cofactor.

Its function is as follows. Binds 16S rRNA, required for the assembly of 30S particles and may also be responsible for determining the conformation of the 16S rRNA at the A site. The sequence is that of Small ribosomal subunit protein uS14 from Helicobacter pylori (strain G27).